The primary structure comprises 277 residues: Small ribosomal subunit protein uS2 (277 aa).

Residues 255–277 (AVATTDEASAPSAAATETTTEEG) form a disordered region. The span at 257 to 277 (ATTDEASAPSAAATETTTEEG) shows a compositional bias: low complexity.

Belongs to the universal ribosomal protein uS2 family.

This chain is Small ribosomal subunit protein uS2, found in Mycobacteroides abscessus (strain ATCC 19977 / DSM 44196 / CCUG 20993 / CIP 104536 / JCM 13569 / NCTC 13031 / TMC 1543 / L948) (Mycobacterium abscessus).